Consider the following 699-residue polypeptide: Protein Scribble homolog let-413 (699 aa).

LRR repeat units follow at residues Lys37 to Arg59, His60 to Leu81, Gln83 to Cys104, Leu106 to Cys127, Ser129 to Leu150, Asn152 to Arg174, Lys175 to Leu196, Ser198 to Cys219, Met221 to Met242, Asn244 to Leu265, Arg267 to Cys288, Ser290 to Leu311, Gln313 to Cys334, Ser336 to Cys357, Asn359 to Leu380, and Lys382 to Arg403. In terms of domain architecture, PDZ spans Ala584–Ser665. Residues Arg656–Ser699 form a disordered region. 2 stretches are compositionally biased toward polar residues: residues Ser659 to Leu676 and Pro684 to Ser699.

Belongs to the LAP (LRR and PDZ) protein family. Expressed in the terminal web of the intestine. Expressed in seam cells. Expressed in the basolateral surfaces of epithelia and the nervous system. Expressed in the intestine, epidermis, excretory canal, reproductive system including vulva, uterus and spermatheca, in both larval and adult stage animals.

The protein localises to the basolateral cell membrane. In terms of biological role, critical role in assembling adherens junctions; adapter protein involved in polarizing protein trafficking in epithelial cells. Necessary to maintain, not establish, the entire terminal web (organelle-depleted, intermediate filament-rich layer of cytoplasm that underlies the apical microvilli of polarized epithelial cells) or brush border assembly at the apical surface gut cells. Required for correct localization of ifb-2 intermediate filaments in the terminal web. Required for dlg-1 and hmr-1 lateral localization. Maintains cell polarity by correctly positioning adherens junction protein components including ajm-1 and hmp-1 at discrete subapical positions. Plays a role in the correct localization of the dlg-1-ajm-1 complex, polarity protein par-3, and actin microfilament to the apical junction of spermatheca cells, and is required for ovulation. Regulates the establishment of newly-formed epithelia in conjunction with dlg-1. Required in the epidermis during larval development. Plays a role in cellular junction integrity and in the directed outgrowth of seam cells, towards neighboring seam cells, during larval development; probably acts by promoting the assembly and stability of dlg-1 at apical junctions. This Caenorhabditis elegans protein is Protein Scribble homolog let-413.